We begin with the raw amino-acid sequence, 77 residues long: Acyl carrier protein (77 aa).

One can recognise a Carrier domain in the interval 2–77 (SDIADRVKKI…DAVKFISDAS (76 aa)). At S37 the chain carries O-(pantetheine 4'-phosphoryl)serine.

This sequence belongs to the acyl carrier protein (ACP) family. Post-translationally, 4'-phosphopantetheine is transferred from CoA to a specific serine of apo-ACP by AcpS. This modification is essential for activity because fatty acids are bound in thioester linkage to the sulfhydryl of the prosthetic group.

The protein localises to the cytoplasm. It participates in lipid metabolism; fatty acid biosynthesis. Functionally, carrier of the growing fatty acid chain in fatty acid biosynthesis. This is Acyl carrier protein from Roseobacter denitrificans (strain ATCC 33942 / OCh 114) (Erythrobacter sp. (strain OCh 114)).